Consider the following 255-residue polypeptide: Phosphate import ATP-binding protein PstB (255 aa).

The ABC transporter domain occupies 9-250 (IAVQNLNFYY…PKIQRTEDYI (242 aa)). 41–48 (GPSGCGKS) is an ATP binding site.

This sequence belongs to the ABC transporter superfamily. Phosphate importer (TC 3.A.1.7) family. In terms of assembly, the complex is composed of two ATP-binding proteins (PstB), two transmembrane proteins (PstC and PstA) and a solute-binding protein (PstS).

It localises to the cell inner membrane. The enzyme catalyses phosphate(out) + ATP + H2O = ADP + 2 phosphate(in) + H(+). In terms of biological role, part of the ABC transporter complex PstSACB involved in phosphate import. Responsible for energy coupling to the transport system. This chain is Phosphate import ATP-binding protein PstB, found in Haemophilus influenzae (strain 86-028NP).